A 70-amino-acid chain; its full sequence is ATP synthase subunit c (70 aa).

2 helical membrane-spanning segments follow: residues 4–24 (IATAIIIGLGALGAGIGNGLI) and 47–67 (FIGIGLVEALPIIGVAVGFLL).

This sequence belongs to the ATPase C chain family. F-type ATPases have 2 components, F(1) - the catalytic core - and F(0) - the membrane proton channel. F(1) has five subunits: alpha(3), beta(3), gamma(1), delta(1), epsilon(1). F(0) has three main subunits: a(1), b(2) and c(10-14). The alpha and beta chains form an alternating ring which encloses part of the gamma chain. F(1) is attached to F(0) by a central stalk formed by the gamma and epsilon chains, while a peripheral stalk is formed by the delta and b chains.

The protein resides in the cell membrane. Its function is as follows. F(1)F(0) ATP synthase produces ATP from ADP in the presence of a proton or sodium gradient. F-type ATPases consist of two structural domains, F(1) containing the extramembraneous catalytic core and F(0) containing the membrane proton channel, linked together by a central stalk and a peripheral stalk. During catalysis, ATP synthesis in the catalytic domain of F(1) is coupled via a rotary mechanism of the central stalk subunits to proton translocation. In terms of biological role, key component of the F(0) channel; it plays a direct role in translocation across the membrane. A homomeric c-ring of between 10-14 subunits forms the central stalk rotor element with the F(1) delta and epsilon subunits. In Exiguobacterium sibiricum (strain DSM 17290 / CCUG 55495 / CIP 109462 / JCM 13490 / 255-15), this protein is ATP synthase subunit c.